Reading from the N-terminus, the 472-residue chain is Chitobiosyldiphosphodolichol beta-mannosyltransferase (472 aa).

Residues 1-20 are Lumenal-facing; it reads MEEFQFIKYKGFDHVFKYSG. Residues 21-41 form a helical membrane-spanning segment; it reads PWLWWLVGFYLCLPILAYTLL. Topologically, residues 42–118 are cytoplasmic; that stretch reads PYLTMNGTIS…PITVTKNTSN (77 aa). The helical intramembrane region spans 119-139; that stretch reads LPFILFAAKKMVVQFFQLLKL. Over 140-472 the chain is Cytoplasmic; the sequence is LSDFRGTDYV…MGKRFEYSTD (333 aa).

The protein belongs to the glycosyltransferase group 1 family.

Its subcellular location is the endoplasmic reticulum membrane. It carries out the reaction an N,N'-diacetylchitobiosyl-diphospho-di-trans,poly-cis-dolichol + GDP-alpha-D-mannose = a beta-D-Man-(1-&gt;4)-beta-D-GlcNAc-(1-&gt;4)-alpha-D-GlcNAc-diphospho-di-trans,poly-cis-dolichol + GDP + H(+). Its pathway is protein modification; protein glycosylation. In terms of biological role, participates in the formation of the lipid-linked precursor oligosaccharide for N-glycosylation. Involved in assembling the dolichol-pyrophosphate-GlcNAc(2)-Man(5) intermediate on the cytoplasmic surface of the ER. This chain is Chitobiosyldiphosphodolichol beta-mannosyltransferase (ALG1), found in Debaryomyces hansenii (strain ATCC 36239 / CBS 767 / BCRC 21394 / JCM 1990 / NBRC 0083 / IGC 2968) (Yeast).